A 212-amino-acid chain; its full sequence is Probable GTP-binding protein EngB (212 aa).

In terms of domain architecture, EngB-type G spans 25–199; it reads FGYEVAFAGR…WAKLDEWMEY (175 aa). GTP-binding positions include 33 to 40, 60 to 64, 78 to 81, 145 to 148, and 178 to 180; these read GRSNAGKS, GRTQL, DLPG, TKSD, and FSS. Residues Ser-40 and Thr-62 each coordinate Mg(2+).

The protein belongs to the TRAFAC class TrmE-Era-EngA-EngB-Septin-like GTPase superfamily. EngB GTPase family. Requires Mg(2+) as cofactor.

Its function is as follows. Necessary for normal cell division and for the maintenance of normal septation. The sequence is that of Probable GTP-binding protein EngB from Hydrogenovibrio crunogenus (strain DSM 25203 / XCL-2) (Thiomicrospira crunogena).